The chain runs to 496 residues: Glycerol kinase (496 aa).

An ADP-binding site is contributed by threonine 12. 3 residues coordinate ATP: threonine 12, threonine 13, and serine 14. A sn-glycerol 3-phosphate-binding site is contributed by threonine 12. Arginine 16 serves as a coordination point for ADP. Positions 82, 83, and 134 each coordinate sn-glycerol 3-phosphate. The glycerol site is built by arginine 82, glutamate 83, and tyrosine 134. Phosphohistidine; by HPr is present on histidine 230. Aspartate 244 is a binding site for sn-glycerol 3-phosphate. Glycerol-binding residues include aspartate 244 and glutamine 245. Threonine 266 and glycine 309 together coordinate ADP. ATP contacts are provided by threonine 266, glycine 309, glutamine 313, and glycine 410. Residues glycine 410 and asparagine 414 each coordinate ADP.

It belongs to the FGGY kinase family. Homotetramer and homodimer (in equilibrium). Post-translationally, the phosphoenolpyruvate-dependent sugar phosphotransferase system (PTS), including enzyme I, and histidine-containing protein (HPr) are required for the phosphorylation, which leads to the activation of the enzyme.

The enzyme catalyses glycerol + ATP = sn-glycerol 3-phosphate + ADP + H(+). It functions in the pathway polyol metabolism; glycerol degradation via glycerol kinase pathway; sn-glycerol 3-phosphate from glycerol: step 1/1. Its activity is regulated as follows. Activated by phosphorylation and inhibited by fructose 1,6-bisphosphate (FBP). Key enzyme in the regulation of glycerol uptake and metabolism. Catalyzes the phosphorylation of glycerol to yield sn-glycerol 3-phosphate. The polypeptide is Glycerol kinase (Bacillus cereus (strain G9842)).